A 364-amino-acid polypeptide reads, in one-letter code: Methylthioribose-1-phosphate isomerase (364 aa).

The active-site Proton donor is Asp254.

This sequence belongs to the eIF-2B alpha/beta/delta subunits family. MtnA subfamily.

The protein resides in the cytoplasm. It localises to the nucleus. The catalysed reaction is 5-(methylsulfanyl)-alpha-D-ribose 1-phosphate = 5-(methylsulfanyl)-D-ribulose 1-phosphate. Its pathway is amino-acid biosynthesis; L-methionine biosynthesis via salvage pathway; L-methionine from S-methyl-5-thio-alpha-D-ribose 1-phosphate: step 1/6. Functionally, catalyzes the interconversion of methylthioribose-1-phosphate (MTR-1-P) into methylthioribulose-1-phosphate (MTRu-1-P). The polypeptide is Methylthioribose-1-phosphate isomerase (Drosophila ananassae (Fruit fly)).